We begin with the raw amino-acid sequence, 210 residues long: T-cell surface glycoprotein CD8 beta-2 chain (210 aa).

A signal peptide spans 1–18 (MRPRLWLLLAAQLTVLHG). The 114-residue stretch at 19–132 (NSVLQQTPAY…ELTFGKGTQL (114 aa)) folds into the Ig-like V-type domain. At 19–170 (NSVLQQTPAY…ETQKGPLCSP (152 aa)) the chain is on the extracellular side. A disulfide bridge links cysteine 41 with cysteine 116. N-linked (GlcNAc...) asparagine glycosylation is present at asparagine 102. The chain crosses the membrane as a helical span at residues 171–191 (VTLGLLVAGVLVLLVSLGVAM). Residues 192–210 (HLCCRRRRARLRFMKQFYK) are Cytoplasmic-facing.

As to quaternary structure, in general heterodimer of an alpha and a beta chain linked by two disulfide bonds.

The protein localises to the cell membrane. Its function is as follows. Identifies cytotoxic/suppressor T-cells that interact with MHC class I bearing targets. CD8 is thought to play a role in the process of T-cell mediated killing. The protein is T-cell surface glycoprotein CD8 beta-2 chain of Homo sapiens (Human).